Reading from the N-terminus, the 83-residue chain is Toxin CjTL8 (83 aa).

An N-terminal signal peptide occupies residues 1-20; sequence MSSAIKILALLMVLVALAQA. Residues 21–44 constitute a propeptide that is removed on maturation; the sequence is KPRKDYRAYPDFDDKSVILEDDKR. Phe81 carries the post-translational modification Phenylalanine amide.

In terms of processing, contains 3 disulfide bonds.

The protein localises to the secreted. It is found in the nematocyst. Its function is as follows. In vivo, induces immediate paralysis on shrimps (C.multidentata), followed by death when high doses are injected. No activity is observed when injected into fly larvae (M.domestica). In Epiactis japonica (Sea anemone), this protein is Toxin CjTL8.